A 405-amino-acid chain; its full sequence is Elongation factor Tu (405 aa).

The region spanning 10–213 (KEHVNVGTIG…AMDEYIPTPE (204 aa)) is the tr-type G domain. The tract at residues 19 to 26 (GHVDHGKS) is G1. 19 to 26 (GHVDHGKS) is a binding site for GTP. Ser-26 contributes to the Mg(2+) binding site. The segment at 64-68 (GITIN) is G2. The segment at 85–88 (DCPG) is G3. GTP-binding positions include 85 to 89 (DCPGH) and 140 to 143 (NKCD). The tract at residues 140–143 (NKCD) is G4. The segment at 178–180 (SAL) is G5.

It belongs to the TRAFAC class translation factor GTPase superfamily. Classic translation factor GTPase family. EF-Tu/EF-1A subfamily. As to quaternary structure, monomer.

The protein resides in the cytoplasm. The catalysed reaction is GTP + H2O = GDP + phosphate + H(+). Functionally, GTP hydrolase that promotes the GTP-dependent binding of aminoacyl-tRNA to the A-site of ribosomes during protein biosynthesis. This chain is Elongation factor Tu, found in Aquifex pyrophilus.